The following is a 161-amino-acid chain: E3 ubiquitin ligase complex SCF subunit sconC (161 aa).

The tract at residues 102 to 161 (ILAANYLDIKGLLDVGCKTVANMIKGKSPEEIRKTFNIQNDFTPEEEDQIRRENEWAEDR) is interaction with the F-box domain of F-box proteins.

It belongs to the SKP1 family. Component of the SCF (SKP1-CUL1-F-box protein) E3 ubiquitin ligase complexes.

The protein operates within protein modification; protein ubiquitination. Its function is as follows. Essential component of the SCF (SKP1-CUL1-F-box protein) E3 ubiquitin ligase complexes, which mediate the ubiquitination and subsequent proteasomal degradation of target proteins. Controls sulfur metabolite repression, probably by mediating the inactivation or degradation of the metR transcription factor. In Aspergillus flavus (strain ATCC 200026 / FGSC A1120 / IAM 13836 / NRRL 3357 / JCM 12722 / SRRC 167), this protein is E3 ubiquitin ligase complex SCF subunit sconC (sconC).